A 150-amino-acid chain; its full sequence is 3-dehydroquinate dehydratase (150 aa).

Tyr-26 functions as the Proton acceptor in the catalytic mechanism. Residues Asn-77, His-83, and Asp-90 each contribute to the substrate site. Residue His-103 is the Proton donor of the active site. Substrate is bound by residues 104 to 105 (LS) and Arg-114.

It belongs to the type-II 3-dehydroquinase family. In terms of assembly, homododecamer.

The enzyme catalyses 3-dehydroquinate = 3-dehydroshikimate + H2O. It participates in metabolic intermediate biosynthesis; chorismate biosynthesis; chorismate from D-erythrose 4-phosphate and phosphoenolpyruvate: step 3/7. Functionally, catalyzes a trans-dehydration via an enolate intermediate. This chain is 3-dehydroquinate dehydratase, found in Pectobacterium carotovorum subsp. carotovorum (strain PC1).